The following is a 565-amino-acid chain: Ubiquitin carboxyl-terminal hydrolase 39 (565 aa).

Composition is skewed to basic and acidic residues over residues 1–21 (MSGR…ESES) and 28–39 (VKRERDREREPE). 2 disordered regions span residues 1 to 61 (MSGR…SARE) and 75 to 96 (EREV…GRVD). Ser46 is subject to Phosphoserine. Lys51 is covalently cross-linked (Glycyl lysine isopeptide (Lys-Gly) (interchain with G-Cter in SUMO2)). Ser82 is subject to Phosphoserine. Residues 85–96 (EREVRAKNGRVD) are compositionally biased toward basic and acidic residues. Residues 103–200 (RHCPYLDTIN…YVLKPTFTKQ (98 aa)) form a UBP-type; degenerate zinc finger. Residues Cys136, Cys139, His155, and His161 each contribute to the Zn(2+) site. In terms of domain architecture, USP spans 225 to 555 (VGLNNIKAND…EAYIQIWKRR (331 aa)).

It belongs to the peptidase C19 family. As to quaternary structure, the U4/U6-U5 tri-snRNP complex is a building block of the precatalytic spliceosome (spliceosome B complex). Component of the U4/U6-U5 tri-snRNP complex composed of the U4, U6 and U5 snRNAs and at least PRPF3, PRPF4, PRPF6, PRPF8, PRPF31, SNRNP200, TXNL4A, SNRNP40, SNRPB, SNRPD1, SNRPD2, SNRPD3, SNRPE, SNRPF, SNRPG, DDX23, CD2BP2, PPIH, SNU13, EFTUD2, SART1 and USP39, plus LSM2, LSM3, LSM4, LSM5, LSM6, LSM7 and LSM8.

Its subcellular location is the nucleus. It catalyses the reaction Thiol-dependent hydrolysis of ester, thioester, amide, peptide and isopeptide bonds formed by the C-terminal Gly of ubiquitin (a 76-residue protein attached to proteins as an intracellular targeting signal).. Deubiquitinating enzyme that plays a role in many cellular processes including cellular antiviral response, epithelial morphogenesis, DNA repair or B-cell development. Plays a role in pre-mRNA splicing as a component of the U4/U6-U5 tri-snRNP, one of the building blocks of the precatalytic spliceosome. Specifically regulates immunoglobulin gene rearrangement in a spliceosome-dependent manner, which involves modulating chromatin interactions at the Igh locus and therefore plays an essential role in B-cell development. Regulates AURKB mRNA levels, and thereby plays a role in cytokinesis and in the spindle checkpoint. Regulates apoptosis and G2/M cell cycle checkpoint in response to DNA damage by deubiquitinating and stabilizing CHK2. Also plays an important role in DNA repair by controlling the recruitment of XRCC4/LIG4 to DNA double-strand breaks for non-homologous end-joining repair. Participates in antiviral activity by affecting the type I IFN signaling by stabilizing STAT1 and decreasing its 'Lys-6'-linked ubiquitination. Contributes to non-canonical Wnt signaling during epidermal differentiation. Acts as a negative regulator NF-kappa-B activation through deubiquitination of 'Lys-48'-linked ubiquitination of NFKBIA. This chain is Ubiquitin carboxyl-terminal hydrolase 39 (USP39), found in Pongo abelii (Sumatran orangutan).